The following is a 194-amino-acid chain: Adenylate kinase (194 aa).

8–16 (GIPGVGKTT) is an ATP binding site.

Belongs to the archaeal adenylate kinase family.

It localises to the cytoplasm. The enzyme catalyses AMP + ATP = 2 ADP. The protein is Adenylate kinase (adkA) of Sulfurisphaera tokodaii (strain DSM 16993 / JCM 10545 / NBRC 100140 / 7) (Sulfolobus tokodaii).